A 175-amino-acid chain; its full sequence is Glutamyl-tRNA(Gln) amidotransferase subunit C, mitochondrial (175 aa).

It belongs to the GatC family. As to quaternary structure, subunit of the heterotrimeric GatCAB amidotransferase (AdT) complex, composed of A, B and C subunits.

It is found in the mitochondrion. The catalysed reaction is L-glutamyl-tRNA(Gln) + L-glutamine + ATP + H2O = L-glutaminyl-tRNA(Gln) + L-glutamate + ADP + phosphate + H(+). In terms of biological role, allows the formation of correctly charged Gln-tRNA(Gln) through the transamidation of misacylated Glu-tRNA(Gln) in the mitochondria. The reaction takes place in the presence of glutamine and ATP through an activated gamma-phospho-Glu-tRNA(Gln). In Caenorhabditis elegans, this protein is Glutamyl-tRNA(Gln) amidotransferase subunit C, mitochondrial.